Consider the following 206-residue polypeptide: Protein MIS12 homolog (206 aa).

The stretch at 102-206 (DKCQETNPFS…EKESRRLETQ (105 aa)) forms a coiled coil.

This sequence belongs to the mis12 family. As to quaternary structure, component of the MIS12 complex composed of MIS12, DSN1, NSL1 and PMF1. Also interacts with KNL1, CBX3, CBX5, NDC80 and ZWINT.

The protein resides in the chromosome. Its subcellular location is the centromere. It is found in the kinetochore. Its function is as follows. Part of the MIS12 complex which is required for normal chromosome alignment and segregation and for kinetochore formation during mitosis. Essential for proper kinetochore microtubule attachments. In Mus musculus (Mouse), this protein is Protein MIS12 homolog.